A 515-amino-acid chain; its full sequence is 2-isopropylmalate synthase (515 aa).

The Pyruvate carboxyltransferase domain maps to 5–267 (VIIFDTTLRD…HTSLKNDEIH (263 aa)). Mn(2+) is bound by residues aspartate 14, histidine 202, histidine 204, and asparagine 238. The tract at residues 392–515 (KLNYLSVQSG…EIKQNKITTV (124 aa)) is regulatory domain.

It belongs to the alpha-IPM synthase/homocitrate synthase family. LeuA type 1 subfamily. In terms of assembly, homodimer. It depends on Mn(2+) as a cofactor.

The protein localises to the cytoplasm. It carries out the reaction 3-methyl-2-oxobutanoate + acetyl-CoA + H2O = (2S)-2-isopropylmalate + CoA + H(+). Its pathway is amino-acid biosynthesis; L-leucine biosynthesis; L-leucine from 3-methyl-2-oxobutanoate: step 1/4. Functionally, catalyzes the condensation of the acetyl group of acetyl-CoA with 3-methyl-2-oxobutanoate (2-ketoisovalerate) to form 3-carboxy-3-hydroxy-4-methylpentanoate (2-isopropylmalate). The protein is 2-isopropylmalate synthase of Aliivibrio salmonicida (strain LFI1238) (Vibrio salmonicida (strain LFI1238)).